The chain runs to 465 residues: ATP-dependent rRNA helicase rrp3 (465 aa).

The tract at residues 1 to 46 is disordered; sequence MSALKKRKITEKQPETNSDSEAESVSSRGSAKDETQTSGEEPAPAK. The span at 15–29 shows a compositional bias: polar residues; the sequence is ETNSDSEAESVSSRG. Residues 46–74 carry the Q motif motif; that stretch reads KSFKELGIIDQLCEACENMGYKAPTPIQS. The 172-residue stretch at 77–248 folds into the Helicase ATP-binding domain; the sequence is IPLALEGRDV…RASLSNPVRV (172 aa). 90–97 lines the ATP pocket; that stretch reads AETGSGKT. The DEAD box motif lies at 196 to 199; the sequence is DEAD. The 145-residue stretch at 275–419 folds into the Helicase C-terminal domain; sequence YLVYLLNEFA…EYQVEKDEVM (145 aa). The interval 436 to 465 is disordered; the sequence is MKSFDEKKGARGKKFGKGKRSRDDMDQEEG. The span at 445–455 shows a compositional bias: basic residues; it reads ARGKKFGKGKR.

It belongs to the DEAD box helicase family. DDX47/RRP3 subfamily. As to quaternary structure, interacts with the SSU processome.

The protein resides in the nucleus. It catalyses the reaction ATP + H2O = ADP + phosphate + H(+). Functionally, ATP-dependent rRNA helicase required for pre-ribosomal RNA processing. Involved in the maturation of the 35S-pre-rRNA and to its cleavage to mature 18S rRNA. In Emericella nidulans (strain FGSC A4 / ATCC 38163 / CBS 112.46 / NRRL 194 / M139) (Aspergillus nidulans), this protein is ATP-dependent rRNA helicase rrp3.